The following is a 595-amino-acid chain: uncharacterized protein (595 aa).

Disordered regions lie at residues 50–159 (VNPS…KTKK), 398–430 (TYPT…PPSL), and 450–595 (VTEG…SLDK). Over residues 83–122 (SNKSSALKKSNKSSNKSSNKSSNKSSNKSSNKSSNKSSNK) the composition is skewed to low complexity. Positions 123 to 132 (FPDKSDKSDS) are enriched in basic and acidic residues. Over residues 137–146 (DNSDDSDDSS) the composition is skewed to acidic residues. A compositionally biased stretch (low complexity) spans 398–409 (TYPTTPLFSEPT). Residues 410-420 (IPKPPQQPTTE) are compositionally biased toward pro residues. Over residues 421–430 (PPSGFKPPSL) the composition is skewed to low complexity. Residues 454 to 463 (KVVESDDHTS) show a composition bias toward basic and acidic residues. Over residues 467–476 (IPPPPPPPPS) the composition is skewed to pro residues. Residues 477–529 (ISSDNSSPNKSVKSSTKSSTKSSTKSSTKSSTKSSTKSPSKTPVKSPIKSSSK) are compositionally biased toward low complexity. A compositionally biased stretch (basic and acidic residues) spans 530 to 542 (LSDKKSPTKKIES). Acidic residues predominate over residues 544–553 (GESDSESDSE). Residues 559 to 570 (TKKSTNKIKKIT) are compositionally biased toward basic residues. Residues 571-580 (NNKLENSNTK) show a composition bias toward low complexity. The span at 581–595 (NNKKFSKKKTISLDK) shows a compositional bias: basic residues.

This is an uncharacterized protein from Acanthamoeba polyphaga mimivirus (APMV).